A 540-amino-acid chain; its full sequence is Chaperonin GroEL (540 aa).

Residues 30–33 (TLGP), K51, 87–91 (DGTTT), G415, 479–481 (NAA), and D495 contribute to the ATP site.

It belongs to the chaperonin (HSP60) family. As to quaternary structure, forms a cylinder of 14 subunits composed of two heptameric rings stacked back-to-back. Interacts with the co-chaperonin GroES.

The protein resides in the cytoplasm. It carries out the reaction ATP + H2O + a folded polypeptide = ADP + phosphate + an unfolded polypeptide.. In terms of biological role, together with its co-chaperonin GroES, plays an essential role in assisting protein folding. The GroEL-GroES system forms a nano-cage that allows encapsulation of the non-native substrate proteins and provides a physical environment optimized to promote and accelerate protein folding. This is Chaperonin GroEL from Pluralibacter gergoviae (Enterobacter gergoviae).